The sequence spans 631 residues: tRNA uridine 5-carboxymethylaminomethyl modification enzyme MnmG (631 aa).

Residues 13–18 (GGGHAG), valine 125, and serine 180 contribute to the FAD site. 273-287 (GPRYCPSIEDKVNRY) provides a ligand contact to NAD(+). Glutamine 370 contributes to the FAD binding site.

Belongs to the MnmG family. Homodimer. Heterotetramer of two MnmE and two MnmG subunits. FAD serves as cofactor.

The protein localises to the cytoplasm. NAD-binding protein involved in the addition of a carboxymethylaminomethyl (cmnm) group at the wobble position (U34) of certain tRNAs, forming tRNA-cmnm(5)s(2)U34. In Alcanivorax borkumensis (strain ATCC 700651 / DSM 11573 / NCIMB 13689 / SK2), this protein is tRNA uridine 5-carboxymethylaminomethyl modification enzyme MnmG.